The primary structure comprises 479 residues: Carbohydrate sulfotransferase 3 (479 aa).

Topologically, residues 1 to 20 are cytoplasmic; the sequence is MEKGLTLPQDCRDFVHSLKM. The helical; Signal-anchor for type II membrane protein transmembrane segment at 21-38 threads the bilayer; the sequence is RSKYALFLVFVVIVFVFI. Over 39–479 the chain is Lumenal; sequence EKENKIISRV…LEERGTFWVT (441 aa). 3 N-linked (GlcNAc...) asparagine glycosylation sites follow: asparagine 63, asparagine 74, and asparagine 96. The interval 108–128 is disordered; the sequence is EAAGEEEEEQRKEEEPPRPAV. 141-147 serves as a coordination point for 3'-phosphoadenylyl sulfate; sequence TRTGSSF. The N-linked (GlcNAc...) asparagine glycan is linked to asparagine 256. 301-309 contacts 3'-phosphoadenylyl sulfate; sequence RDPRAVLAS. N-linked (GlcNAc...) asparagine glycosylation is found at asparagine 420 and asparagine 464.

It belongs to the sulfotransferase 1 family. Gal/GlcNAc/GalNAc subfamily. Post-translationally, N-glycosylated. As to expression, widely expressed in adult tissues. Expressed in heart, placenta, skeletal muscle and pancreas. Also expressed in various immune tissues such as spleen, lymph node, thymus and appendix.

It localises to the golgi apparatus membrane. It catalyses the reaction chondroitin beta-D-glucuronate + n 3'-phosphoadenylyl sulfate = chondroitin 6'-sulfate + n adenosine 3',5'-bisphosphate + n H(+). The catalysed reaction is 3'-phosphoadenylyl sulfate + keratan = adenosine 3',5'-bisphosphate + keratan 6'-sulfate.. Its function is as follows. Sulfotransferase that utilizes 3'-phospho-5'-adenylyl sulfate (PAPS) as sulfonate donor to catalyze the transfer of sulfate to position 6 of the N-acetylgalactosamine (GalNAc) residue of chondroitin. Chondroitin sulfate constitutes the predominant proteoglycan present in cartilage and is distributed on the surfaces of many cells and extracellular matrices. Catalyzes with a lower efficiency the sulfation of Gal residues of keratan sulfate, another glycosaminoglycan. Can also catalyze the sulfation of the Gal residues in sialyl N-acetyllactosamine (sialyl LacNAc) oligosaccharides. May play a role in the maintenance of naive T-lymphocytes in the spleen. The polypeptide is Carbohydrate sulfotransferase 3 (CHST3) (Homo sapiens (Human)).